The following is a 560-amino-acid chain: MRRAYFVAIALLVAAGGKTAAGFKHNEPLHASSSNFMASVDTVDEDLQSQNLQESRDPKDDLKLSAGNEERTPSALNNFLKEPKLLESIITAGKAMRTEGEANAIEAASKNLNQIESNKRQRIALTHNAVAGHRGHPSPDSDKSLMSVANENPLMLAESLKDQRPTAIMENAASLLKEHDYRLAPPESSTINDKAPDGRLKNQVVTQKAVQLDKNEHVDESFWREELVSVDQLMRLLDEFDKSAHPTTVNRHEESASAVALKSSNQLESITHQRIAPTSNNVIGQVAHAPSNNVIGQVAHAPSNNVIGQVAHAPSSLSPVLVAKNIPSILADRLMKKRPTAIMKNAARYLTQHINRPAPSGPSTNGATTSNGGLNNQLTSQKTFQLDQNKHVGDVKTFWLPTAVDRQSVPEDWADEVAKGPDTFSNDAVNDEVKRVHAAFLEALNLPFHQYPQETAMMLRMVRWKKNAGPNNDITSALFKTLAKDHEEVLRLQDLLGPDLKKLLGDGKMALPRNLKNLQEALIVKLVIMYDLFFRFCYKHEDFVGDLPHNPSPASWILKL.

A signal peptide spans 1 to 22 (MRRAYFVAIALLVAAGGKTAAG). Disordered stretches follow at residues 48-73 (QSQNLQESRDPKDDLKLSAGNEERTP) and 354-377 (INRPAPSGPSTNGATTSNGGLNNQ). Residues 54 to 72 (ESRDPKDDLKLSAGNEERT) are compositionally biased toward basic and acidic residues. The RxLR-dEER motif lies at 56–71 (RDPKDDLKLSAGNEER). Residues 361–377 (GPSTNGATTSNGGLNNQ) show a composition bias toward polar residues.

The protein belongs to the RxLR effector family.

Its subcellular location is the secreted. It localises to the host nucleus. Its function is as follows. Secreted effector that completely suppresses the host cell death induced by cell death-inducing proteins. The chain is Secreted RxLR effector protein 142 from Plasmopara viticola (Downy mildew of grapevine).